We begin with the raw amino-acid sequence, 131 residues long: Ribonuclease VapC30 (131 aa).

The PINc domain occupies 1-129 (MVIDTSALVA…FQHTDIATVA (129 aa)). Positions 4 and 99 each coordinate Mg(2+).

It belongs to the PINc/VapC protein family. Requires Mg(2+) as cofactor.

Toxic component of a type II toxin-antitoxin (TA) system. An RNase. Its toxic effect is neutralized by coexpression with cognate antitoxin VapB30. This is Ribonuclease VapC30 from Mycobacterium tuberculosis (strain CDC 1551 / Oshkosh).